The primary structure comprises 573 residues: Splicing factor U2af large subunit B (573 aa).

The span at 1 to 12 shows a compositional bias: acidic residues; that stretch reads MPDYEGNGEDID. Positions 1–187 are disordered; the sequence is MPDYEGNGED…DMAPPTSAML (187 aa). Over residues 38 to 145 the composition is skewed to basic and acidic residues; sequence SDSKSQHSSR…QREHAKDRES (108 aa). Residues 161–173 are compositionally biased toward basic residues; that stretch reads SRSRSRSRSKSKR. RRM domains are found at residues 239–322, 359–437, and 478–564; these read RRVY…RPSD, DRIF…RANQ, and EVIS…YPEN.

Belongs to the splicing factor SR family. As to expression, expressed in stems, leaves and apical buds.

The protein resides in the nucleus. In terms of biological role, necessary for the splicing of pre-mRNA. Binds to the U -enriched regions of plant introns. The protein is Splicing factor U2af large subunit B (U2AF65B) of Nicotiana plumbaginifolia (Leadwort-leaved tobacco).